The primary structure comprises 90 residues: Small ribosomal subunit protein uS17 (90 aa).

The protein belongs to the universal ribosomal protein uS17 family. In terms of assembly, part of the 30S ribosomal subunit.

One of the primary rRNA binding proteins, it binds specifically to the 5'-end of 16S ribosomal RNA. The chain is Small ribosomal subunit protein uS17 from Burkholderia ambifaria (strain ATCC BAA-244 / DSM 16087 / CCUG 44356 / LMG 19182 / AMMD) (Burkholderia cepacia (strain AMMD)).